The chain runs to 315 residues: MTNAVEDSGPRDLLFLLISTSRFNRYMPYYTMMAAESLSIEFILYKAGLCFVHCLLLCGAGNTWNDLVDRDIDARVARTKMRPLASGKVTLTEALLWMTGQYFLSVKMLDLILDGRNIWSLMLPLTASIMLYPYLKRPIFSKVFVYPQYILGLAIGYPAITGWASITGSEEPLGDIIKHCIPICLLVFFWCVYFNTAYSHQDSVDDRKMNINSAYVIAGQRIRLFLAFLSVLPLLTIPYIISTINSPWLWVSWMATWTVSIIMQIAQFDSQKLESGGRIHWDNFLLGLWTIAACMVEVGLQKVEFWKNVEGYIKL.

8 helical membrane passes run 40 to 60 (IEFI…LCGA), 84 to 103 (LASG…GQYF), 118 to 135 (IWSL…YPYL), 143 to 163 (VFVY…ITGW), 174 to 194 (GDII…CVYF), 224 to 244 (LFLA…ISTI), 248 to 268 (WLWV…IAQF), and 279 to 299 (IHWD…VEVG).

The protein belongs to the UbiA prenyltransferase family. Mg(2+) is required as a cofactor.

It localises to the golgi apparatus membrane. It carries out the reaction 5,7-dihydroxy-4-methylphthalide + (2E,6E)-farnesyl diphosphate = 4-farnesyl-3,5-dihydroxy-6-methylphthalide + diphosphate. It participates in secondary metabolite biosynthesis; terpenoid biosynthesis. Functionally, polyprenyl transferase; part of the gene cluster that mediates the biosynthesis of mycophenolic acid (MPA), the first isolated antibiotic natural product in the world obtained from a culture of Penicillium brevicompactum in 1893. MpaA is a Golgi apparatus-associated enzyme that catalyzes the prenylation of 5,7-dihydroxy-4,6-dimethylphthalide (DHMP) to yield farnesyl-DHMP (FDHMP). The first step of the pathway is the synthesis of 5-methylorsellinic acid (5MOA) by the cytosolic polyketide synthase mpaC. 5MOA is then converted to the phthalide compound 5,7-dihydroxy-4,6-dimethylphthalide (DHMP) by the endoplasmic reticulum-bound cytochrome P450 monooxygenase mpaDE. MpaDE first catalyzes hydroxylation of 5-MOA to 4,6-dihydroxy-2-(hydroxymethyl)-3-methylbenzoic acid (DHMB). MpaDE then acts as a lactone synthase that catalyzes the ring closure to convert DHMB into DHMP. The next step is the prenylation of DHMP by the Golgi apparatus-associated prenyltransferase mpaA to yield farnesyl-DHMP (FDHMP). The ER-bound oxygenase mpaB then mediates the oxidative cleavage the C19-C20 double bond in FDHMP to yield FDHMP-3C via a mycophenolic aldehyde intermediate. The O-methyltransferase mpaG catalyzes the methylation of FDHMP-3C to yield MFDHMP-3C. After the cytosolic methylation of FDHMP-3C, MFDHMP-3C enters into peroxisomes probably via free diffusion due to its low molecular weight. Upon a peroxisomal CoA ligation reaction, catalyzed by a beta-oxidation component enzyme acyl-CoA ligase ACL891, MFDHMP-3C-CoA would then be restricted to peroxisomes for the following beta-oxidation pathway steps. The peroxisomal beta-oxidation machinery than converts MFDHMP-3C-CoA into MPA_CoA, via a beta-oxidation chain-shortening process. Finally mpaH acts as a peroxisomal acyl-CoA hydrolase with high substrate specificity toward MPA-CoA to release the final product MPA. The protein is Polyprenyl transferase mpaA of Penicillium brevicompactum.